The primary structure comprises 337 residues: tRNA N6-adenosine threonylcarbamoyltransferase (337 aa).

Histidine 111 and histidine 115 together coordinate Fe cation. Substrate is bound by residues 134–138 (LVSGG), aspartate 167, glycine 180, and asparagine 272. Aspartate 300 provides a ligand contact to Fe cation.

Belongs to the KAE1 / TsaD family. Fe(2+) serves as cofactor.

It is found in the cytoplasm. It catalyses the reaction L-threonylcarbamoyladenylate + adenosine(37) in tRNA = N(6)-L-threonylcarbamoyladenosine(37) in tRNA + AMP + H(+). Required for the formation of a threonylcarbamoyl group on adenosine at position 37 (t(6)A37) in tRNAs that read codons beginning with adenine. Is involved in the transfer of the threonylcarbamoyl moiety of threonylcarbamoyl-AMP (TC-AMP) to the N6 group of A37, together with TsaE and TsaB. TsaD likely plays a direct catalytic role in this reaction. This chain is tRNA N6-adenosine threonylcarbamoyltransferase, found in Aeromonas salmonicida (strain A449).